The chain runs to 189 residues: Large ribosomal subunit protein uL5 (189 aa).

Belongs to the universal ribosomal protein uL5 family. In terms of assembly, part of the 50S ribosomal subunit; part of the 5S rRNA/L5/L18/L25 subcomplex. Contacts the 5S rRNA and the P site tRNA. Forms a bridge to the 30S subunit in the 70S ribosome.

Functionally, this is one of the proteins that bind and probably mediate the attachment of the 5S RNA into the large ribosomal subunit, where it forms part of the central protuberance. In the 70S ribosome it contacts protein S13 of the 30S subunit (bridge B1b), connecting the 2 subunits; this bridge is implicated in subunit movement. Contacts the P site tRNA; the 5S rRNA and some of its associated proteins might help stabilize positioning of ribosome-bound tRNAs. In Parafrankia sp. (strain EAN1pec), this protein is Large ribosomal subunit protein uL5.